A 124-amino-acid polypeptide reads, in one-letter code: Mini zinc finger protein 4 (124 aa).

A ZF-HD dimerization-type; degenerate zinc finger spans residues 35-84; sequence YGECRRNHAARMGGHAVDGCREFLAEGEEGTGGALRCAACGCHRSFHRRV.

In terms of assembly, homo- and heterodimers.

It is found in the cytoplasm. In terms of biological role, inhibits zinc finger homeodomain (ZHD) transcription factors, by interacting with them to prevent both their nuclear localization and their DNA-binding properties. In Oryza sativa subsp. japonica (Rice), this protein is Mini zinc finger protein 4 (MIF4).